A 484-amino-acid polypeptide reads, in one-letter code: Antibiotic efflux pump outer membrane protein ArpC (484 aa).

Residues 1–17 form the signal peptide; that stretch reads MTKSLLSLAVTAFILGG. Residue C18 is the site of N-palmitoyl cysteine attachment. Residue C18 is the site of S-diacylglycerol cysteine attachment.

It belongs to the outer membrane factor (OMF) (TC 1.B.17) family.

It is found in the cell outer membrane. The outer membrane component of an antibiotic efflux pump. Confers resistance to numerous structurally unrelated antibiotics such as carbenicillin, chloramphenicol, erythromycin, novobiocin, streptomycin and tetracycline. Is not involved in organic solvent efflux. The polypeptide is Antibiotic efflux pump outer membrane protein ArpC (arpC) (Pseudomonas putida (Arthrobacter siderocapsulatus)).